The following is a 171-amino-acid chain: Endoribonuclease YbeY (171 aa).

Positions 126, 130, and 136 each coordinate Zn(2+).

Belongs to the endoribonuclease YbeY family. Zn(2+) is required as a cofactor.

It localises to the cytoplasm. Its function is as follows. Single strand-specific metallo-endoribonuclease involved in late-stage 70S ribosome quality control and in maturation of the 3' terminus of the 16S rRNA. This chain is Endoribonuclease YbeY, found in Rhizobium etli (strain CIAT 652).